We begin with the raw amino-acid sequence, 83 residues long: BmKBT-like peptide (83 aa).

The first 19 residues, 1–19 (MKAALLLVISTLMLIGVLT), serve as a signal peptide directing secretion. The LCN-type CS-alpha/beta domain maps to 21–81 (KSGYPIQHDG…TWSRETNKCR (61 aa)). 4 disulfide bridges follow: cysteine 31–cysteine 80, cysteine 35–cysteine 54, cysteine 41–cysteine 61, and cysteine 45–cysteine 63. A propeptide (removed by a carboxypeptidase) is located at residue lysine 83.

This sequence belongs to the long (4 C-C) scorpion toxin superfamily. Sodium channel inhibitor family. Beta subfamily. In terms of tissue distribution, expressed by the venom gland.

It localises to the secreted. Its function is as follows. Sodium channel inhibitor. Possesses potent toxicity in mice but induces only paralysis in cotton bollworm. The chain is BmKBT-like peptide from Olivierus martensii (Manchurian scorpion).